We begin with the raw amino-acid sequence, 112 residues long: uncharacterized protein (112 aa).

Residues 70–112 (GLYRGRRPPGRDAARPTTAILFAQGRPPLLDQRAPTRRGSHQR) are disordered.

This is an uncharacterized protein from Homo sapiens (Human).